A 419-amino-acid chain; its full sequence is Caspase-12 (419 aa).

A CARD domain is found at 1-92 (MAARRTHERD…QLSLQFSNDE (92 aa)). A Phosphoserine modification is found at Ser-85. The disordered stretch occupies residues 88–113 (FSNDEDDGPQKICTPSSPSESKRKVE). Active-site residues include His-250 and Cys-298.

The protein belongs to the peptidase C14A family. As to quaternary structure, heterotetramer that consists of two anti-parallel arranged heterodimers, each one formed by two subunits (Potential). Interacts with TRAF2 under resting conditions; this interaction is reduced in ER stress conditions. As to expression, mainly expressed in skeletal muscle and lung.

Involved in the activation cascade of caspases responsible for apoptosis execution. The protein is Caspase-12 (Casp12) of Mus musculus (Mouse).